Reading from the N-terminus, the 520-residue chain is Chaperone Ric-8B (520 aa).

Phosphoserine is present on S468. At T473 the chain carries Phosphothreonine.

It belongs to the synembryn family. As to quaternary structure, interacts with GDP-bound G(s) G-alpha proteins GNAL and GNAS. Does not interact with G-alpha proteins when they are in complex with subunits beta and gamma.

It localises to the cytoplasm. The protein localises to the cell cortex. Its function is as follows. Chaperone that specifically binds and folds nascent G(s) G-alpha proteins (GNAS and GNAL) prior to G protein heterotrimer formation, promoting their association with the plasma membrane. Also acts as a guanine nucleotide exchange factor (GEF) for G(s) proteins by stimulating exchange of bound GDP for free GTP. Acts as an important component for odorant signal transduction by mediating GNAL (G(olf)-alpha) folding, thereby promoting-dependent cAMP accumulation in olfactory sensory neurons. This Rattus norvegicus (Rat) protein is Chaperone Ric-8B (Ric8b).